The following is a 318-amino-acid chain: Cytochrome f (318 aa).

A signal peptide spans 1–32 (MQNKNNYNWLKEWVIRSFLLLTLLTWPSVSNA). Heme is bound by residues Y33, C53, C56, and H57. Residues 284 to 304 (IQGLLLFFASVVLAQIFLVLK) form a helical membrane-spanning segment.

This sequence belongs to the cytochrome f family. In terms of assembly, the 4 large subunits of the cytochrome b6-f complex are cytochrome b6, subunit IV (17 kDa polypeptide, petD), cytochrome f and the Rieske protein, while the 4 small subunits are PetG, PetL, PetM and PetN. The complex functions as a dimer. The cofactor is heme.

It localises to the plastid. It is found in the chloroplast thylakoid membrane. Component of the cytochrome b6-f complex, which mediates electron transfer between photosystem II (PSII) and photosystem I (PSI), cyclic electron flow around PSI, and state transitions. The polypeptide is Cytochrome f (Angiopteris evecta (Mule's foot fern)).